We begin with the raw amino-acid sequence, 97 residues long: Antitoxin YafN (97 aa).

Belongs to the phD/YefM antitoxin family. As to quaternary structure, probably forms a complex with the mRNA interferase YafO which inhibits the mRNA interferase activity.

Antitoxin component of a type II toxin-antitoxin (TA) system. Functions as an mRNA interferase antitoxin; overexpression prevents YafO-mediated cessation of cell growth and inhibition of cell proliferation. This Escherichia coli (strain K12) protein is Antitoxin YafN (yafN).